The following is a 657-amino-acid chain: Kinesin-like protein KIF22 (657 aa).

Residues 1 to 33 (MNVRAKKKPQQREMASASSGPSRSLSKGGVSRR) are disordered. A compositionally biased stretch (low complexity) spans 16–33 (SASSGPSRSLSKGGVSRR). Positions 38-360 (RVRVAVRLRP…LNFTARSKEV (323 aa)) constitute a Kinesin motor domain. Residue 119 to 126 (GPTGAGKT) participates in ATP binding. A disordered region spans residues 388–415 (PSEAKKAKGPEEESTGSPESTAAPASAS). The span at 402-415 (TGSPESTAAPASAS) shows a compositional bias: low complexity. Phosphoserine is present on residues Ser404, Ser419, and Ser444. A Glycyl lysine isopeptide (Lys-Gly) (interchain with G-Cter in SUMO2) cross-link involves residue Lys457. The stretch at 457–502 (KRERMVLIKTVEEKNLEIERLKMKQKELEAKVLAQEALDPKEKENT) forms a coiled coil. A phosphoserine mark is found at Ser537, Ser554, and Ser573.

It belongs to the TRAFAC class myosin-kinesin ATPase superfamily. Kinesin family. Interacts with FAM83D and SIAH1. In terms of processing, ubiquitinated; mediated by SIAH1 and leading to its subsequent proteasomal degradation.

The protein resides in the nucleus. It is found in the cytoplasm. It localises to the cytoskeleton. Functionally, kinesin family member that is involved in spindle formation and the movements of chromosomes during mitosis and meiosis. Binds to microtubules and to DNA. Plays a role in congression of laterally attached chromosomes in NDC80-depleted cells. In Rattus norvegicus (Rat), this protein is Kinesin-like protein KIF22 (Kif22).